A 938-amino-acid polypeptide reads, in one-letter code: Isoleucine--tRNA ligase (938 aa).

Residues 58–68 (PYANGNIHIGH) carry the 'HIGH' region motif. E561 contributes to the L-isoleucyl-5'-AMP binding site. Positions 602-606 (KMSKS) match the 'KMSKS' region motif. K605 lines the ATP pocket. The Zn(2+) site is built by C901, C904, C921, and C924.

This sequence belongs to the class-I aminoacyl-tRNA synthetase family. IleS type 1 subfamily. As to quaternary structure, monomer. Zn(2+) serves as cofactor.

It is found in the cytoplasm. The enzyme catalyses tRNA(Ile) + L-isoleucine + ATP = L-isoleucyl-tRNA(Ile) + AMP + diphosphate. In terms of biological role, catalyzes the attachment of isoleucine to tRNA(Ile). As IleRS can inadvertently accommodate and process structurally similar amino acids such as valine, to avoid such errors it has two additional distinct tRNA(Ile)-dependent editing activities. One activity is designated as 'pretransfer' editing and involves the hydrolysis of activated Val-AMP. The other activity is designated 'posttransfer' editing and involves deacylation of mischarged Val-tRNA(Ile). The protein is Isoleucine--tRNA ligase of Yersinia pestis bv. Antiqua (strain Angola).